Here is a 104-residue protein sequence, read N- to C-terminus: Integration host factor subunit beta (104 aa).

It belongs to the bacterial histone-like protein family. Heterodimer of an alpha and a beta chain.

This protein is one of the two subunits of integration host factor, a specific DNA-binding protein that functions in genetic recombination as well as in transcriptional and translational control. This Neisseria gonorrhoeae protein is Integration host factor subunit beta (ihfB).